The sequence spans 761 residues: Zinc finger protein 711 (761 aa).

Residues Lys224, Lys235, and Lys296 each participate in a glycyl lysine isopeptide (Lys-Gly) (interchain with G-Cter in SUMO2) cross-link. 5 C2H2-type zinc fingers span residues 383 to 408, 414 to 436, 476 to 499, 505 to 527, and 533 to 556; these read YPCH…HPDH, YQCT…LESH, HKCK…LAVH, HVCV…MRTH, and YQCQ…KSKH. The C2H2-type 6; atypical zinc finger occupies 562 to 584; the sequence is YKCEHCPQAFGDERELQRHLDLF. Cys564, Cys567, and His580 together coordinate Zn(2+). C2H2-type zinc fingers lie at residues 590–613, 619–641, 647–670, 676–698, 704–727, and 733–755; these read HQCP…ISVH, HKCE…SDIH, HQCR…LSVH, LKCK…MKTH, YQCE…ISIH, and HRCE…IMRH.

This sequence belongs to the krueppel C2H2-type zinc-finger protein family. In terms of assembly, interacts with PHF8.

The protein localises to the nucleus. In terms of biological role, transcription regulator required for brain development. Probably acts as a transcription factor that binds to the promoter of target genes and recruits PHF8 histone demethylase, leading to activated expression of genes involved in neuron development, such as KDM5C. May compete with transcription factor ARX for activation of expression of KDM5C. In Mus musculus (Mouse), this protein is Zinc finger protein 711 (Znf711).